Here is a 377-residue protein sequence, read N- to C-terminus: MKRILCITGTRADFGKLKPLLAYIENHPDLELHLIVTGMHMMKTYGRTYKEVTRENYQHTYLFSNQIQGEPMGAVLGNTITFISRLSDEIEPDMVMIHGDRLEALAGAAVGALSSRLVCHIEGGELSGTVDDSIRHSISKLSHIHLVANEQAVTRLVQMGEKRKHIHIIGSPDLDVMASSTLPSLEEVKEYYGLPYENYGISMFHPVTTEAHLMPQYAAQYFKALELSGQNIISIYPNNDTGTESILQELLKYQSDKFIAFPSIRFEYFLVLLKHAKFMVGNSSAGIREAPLYGVPSIDVGTRQSNRHMGKSIIHTDYETKNIFDAIQQACSLGKFEADDTFNGGDTRTSTERFAEVINNPETWNVSAQKRFIDLNL.

His212 is a catalytic residue.

The protein belongs to the UDP-N-acetylglucosamine 2-epimerase family. As to quaternary structure, homodimer.

It carries out the reaction UDP-N-acetyl-alpha-D-glucosamine + H2O = aldehydo-N-acetyl-D-mannosamine + UDP + H(+). Functionally, catalyzes the conversion of UDP-N-acetylglucosamine (UDP-GlcNAc) to UDP and N-acetyl-D-mannosamine (ManNAc). In Neisseria meningitidis serogroup B (strain ATCC BAA-335 / MC58), this protein is UDP-N-acetylglucosamine 2-epimerase (siaA).